A 209-amino-acid chain; its full sequence is MTNKKQSASSQRWLKEHFDDKYVQEAQKKGWRSRAVFKLDEVQSRDKLLRPAMTVVDLGAAPGSWSQYLAEKVGDKGQVIACDILPMDSLAGVDFLQGDFREEAVLSALLKRIDGKNVDVVLSDMAPNMSGNNSVDQAGSMYLVELALDMCNQVLKKNGAFIVKVFQGEGFDQFLQDVRNSFKTVKIRKPDASRARSREVYIVATGYKL.

S-adenosyl-L-methionine is bound by residues Gly63, Trp65, Asp83, Asp99, and Asp124. Catalysis depends on Lys164, which acts as the Proton acceptor.

The protein belongs to the class I-like SAM-binding methyltransferase superfamily. RNA methyltransferase RlmE family.

Its subcellular location is the cytoplasm. The enzyme catalyses uridine(2552) in 23S rRNA + S-adenosyl-L-methionine = 2'-O-methyluridine(2552) in 23S rRNA + S-adenosyl-L-homocysteine + H(+). In terms of biological role, specifically methylates the uridine in position 2552 of 23S rRNA at the 2'-O position of the ribose in the fully assembled 50S ribosomal subunit. This is Ribosomal RNA large subunit methyltransferase E from Pseudoalteromonas translucida (strain TAC 125).